Reading from the N-terminus, the 138-residue chain is D-ribose pyranase (138 aa).

Histidine 20 functions as the Proton donor in the catalytic mechanism. Substrate-binding positions include aspartate 28, histidine 105, and tyrosine 127–asparagine 129.

The protein belongs to the RbsD / FucU family. RbsD subfamily. Homodecamer.

It is found in the cytoplasm. It catalyses the reaction beta-D-ribopyranose = beta-D-ribofuranose. It participates in carbohydrate metabolism; D-ribose degradation; D-ribose 5-phosphate from beta-D-ribopyranose: step 1/2. Functionally, catalyzes the interconversion of beta-pyran and beta-furan forms of D-ribose. The sequence is that of D-ribose pyranase from Psychromonas ingrahamii (strain DSM 17664 / CCUG 51855 / 37).